Here is a 493-residue protein sequence, read N- to C-terminus: Glycerol kinase (493 aa).

Thr-11 is a binding site for ADP. ATP contacts are provided by Thr-11, Thr-12, and Ser-13. Thr-11 serves as a coordination point for sn-glycerol 3-phosphate. Arg-15 lines the ADP pocket. Positions 80, 81, 132, and 241 each coordinate sn-glycerol 3-phosphate. Residues Arg-80, Glu-81, Tyr-132, Asp-241, and Gln-242 each coordinate glycerol. ADP is bound by residues Thr-263 and Gly-306. ATP-binding residues include Thr-263, Gly-306, Gln-310, and Gly-408. Position 408 (Gly-408) interacts with ADP.

It belongs to the FGGY kinase family.

It carries out the reaction glycerol + ATP = sn-glycerol 3-phosphate + ADP + H(+). The protein operates within polyol metabolism; glycerol degradation via glycerol kinase pathway; sn-glycerol 3-phosphate from glycerol: step 1/1. Inhibited by fructose 1,6-bisphosphate (FBP). Its function is as follows. Key enzyme in the regulation of glycerol uptake and metabolism. Catalyzes the phosphorylation of glycerol to yield sn-glycerol 3-phosphate. The protein is Glycerol kinase of Cereibacter sphaeroides (strain ATCC 17025 / ATH 2.4.3) (Rhodobacter sphaeroides).